We begin with the raw amino-acid sequence, 643 residues long: MLNMWKVRELVDKATNVVMNYSEIESKVREATNDDPWGPSGQLMGEIAKATFMYEQFPELMNMLWSRMLKDNKKNWRRVYKSLLLLAYLIRNGSERVVTSAREHIYDLRSLENYHFVDEHGKDQGINIRQKVKELVEFAQDDDRLREERKKAKKNKDKYVGVSSDSVGGFRYSERYDPEPKSKWDEEWDKNKSAFPFSDKLGELSDKIGSTIDDTISKFRRKDREDSPERCSDSDEEKKARRGRSPKGEFKDEEETVTTKHIHITQATETTTTRHKRTANPSKTIDLGAAAHYTGDKASPDQNASTHTPQSSLKTSVPSSKSSGDLVDLFDGTSQSTGGSADLFGGFADFGSAAASGNFPSQVTATSGNGDFGDWSAFNQAPSVPVAASGELFGSASQPAVELVSSSQPALGPPPAASNSSDLFDLMGSSQATMTSSQSMNFSMMSTNTVGLGLPMSRSQPLQNVSTVLQKPNPLYNQNTDMVQKSVSKTLPSTWSDPSVNISLDNLLPGMQPSKPQQPSLNTMIQQQNMQQPMNMMTQSFGAVNLSSPSNMLPVRPQTNPLMGGPMPMSMPNVMTGTMGMAPLGNSPMMNQSMMGMNMNIGMSTTGMGLTGTMGMGMPNLAMTSGTMQPKQDAFANFANFSK.

One can recognise an ENTH domain in the interval asparagine 16–arginine 149. Arginine 29 lines the a 1,2-diacyl-sn-glycero-3-phospho-(1D-myo-inositol-4,5-bisphosphate) pocket. The interval phenylalanine 52–tyrosine 54 is interaction with VTI1B. A 1,2-diacyl-sn-glycero-3-phospho-(1D-myo-inositol-4,5-bisphosphate) is bound at residue arginine 67. Interaction with VTI1B regions lie at residues serine 94–arginine 96 and aspartate 142–lysine 153. Serine 163, serine 166, serine 173, serine 205, serine 210, serine 227, serine 245, and serine 299 each carry phosphoserine. The disordered stretch occupies residues phenylalanine 219–aspartate 331. The span at lysine 222–lysine 239 shows a compositional bias: basic and acidic residues. The span at proline 300–glutamine 310 shows a compositional bias: polar residues. The residue at position 308 (threonine 308) is a Phosphothreonine. Residues serine 311 to serine 323 show a composition bias toward low complexity. A phosphoserine mark is found at serine 312 and serine 642.

Belongs to the epsin family. As to quaternary structure, binds clathrin heavy chain and AP-2. Interacts with VTI1B. Interacts with GGA2 (via GAE domain). Interacts with AP1G1 (via GAE domain). Interacts with AP1G2 (via GAE domain).

Its subcellular location is the cytoplasm. The protein localises to the perinuclear region. It is found in the membrane. It localises to the cytoplasmic vesicle. The protein resides in the clathrin-coated vesicle. In terms of biological role, binds to membranes enriched in phosphatidylinositol 4,5-bisphosphate (PtdIns(4,5)P2). May have a role in transport via clathrin-coated vesicles from the trans-Golgi network to endosomes. Stimulates clathrin assembly. The sequence is that of Clathrin interactor 1 (CLINT1) from Bos taurus (Bovine).